Consider the following 641-residue polypeptide: 1-deoxy-D-xylulose-5-phosphate synthase (641 aa).

Thiamine diphosphate contacts are provided by residues H71 and 112 to 114; that span reads SHA. Residue D144 coordinates Mg(2+). Thiamine diphosphate is bound by residues 145 to 146, N174, Y285, and E366; that span reads GA. N174 contributes to the Mg(2+) binding site.

Belongs to the transketolase family. DXPS subfamily. In terms of assembly, homodimer. Mg(2+) serves as cofactor. Thiamine diphosphate is required as a cofactor.

The catalysed reaction is D-glyceraldehyde 3-phosphate + pyruvate + H(+) = 1-deoxy-D-xylulose 5-phosphate + CO2. The protein operates within metabolic intermediate biosynthesis; 1-deoxy-D-xylulose 5-phosphate biosynthesis; 1-deoxy-D-xylulose 5-phosphate from D-glyceraldehyde 3-phosphate and pyruvate: step 1/1. In terms of biological role, catalyzes the acyloin condensation reaction between C atoms 2 and 3 of pyruvate and glyceraldehyde 3-phosphate to yield 1-deoxy-D-xylulose-5-phosphate (DXP). The polypeptide is 1-deoxy-D-xylulose-5-phosphate synthase (Mycobacteroides abscessus (strain ATCC 19977 / DSM 44196 / CCUG 20993 / CIP 104536 / JCM 13569 / NCTC 13031 / TMC 1543 / L948) (Mycobacterium abscessus)).